The following is a 100-amino-acid chain: Large ribosomal subunit protein uL23 (100 aa).

It belongs to the universal ribosomal protein uL23 family. As to quaternary structure, part of the 50S ribosomal subunit. Contacts protein L29, and trigger factor when it is bound to the ribosome.

One of the early assembly proteins it binds 23S rRNA. One of the proteins that surrounds the polypeptide exit tunnel on the outside of the ribosome. Forms the main docking site for trigger factor binding to the ribosome. The sequence is that of Large ribosomal subunit protein uL23 from Photorhabdus laumondii subsp. laumondii (strain DSM 15139 / CIP 105565 / TT01) (Photorhabdus luminescens subsp. laumondii).